An 844-amino-acid chain; its full sequence is Translation initiation factor IF-2 (844 aa).

Over residues 1-11 (MTEDVKADAPK) the composition is skewed to basic and acidic residues. Disordered stretches follow at residues 1–48 (MTED…VKTD) and 79–249 (RLEA…GTAL). The segment covering 21-30 (TTVSSTTTGG) has biased composition (low complexity). The span at 79-161 (RLEAEKAATK…AAEEAKRYAE (83 aa)) shows a compositional bias: basic and acidic residues. Over residues 162–175 (ADDSDNESSSEDYS) the composition is skewed to acidic residues. The segment covering 200-210 (RGKNKVAKAKK) has biased composition (basic residues). The segment covering 211-237 (GGRDDENSKNSKNERESNRKNQKDAKF) has biased composition (basic and acidic residues). The region spanning 343–513 (TRAPVVTIMG…LLQSEVLELT (171 aa)) is the tr-type G domain. Residues 352-359 (GHVDHGKT) are G1. Position 352–359 (352–359 (GHVDHGKT)) interacts with GTP. The G2 stretch occupies residues 377–381 (GITQH). Residues 399–402 (DTPG) are G3. Residues 399–403 (DTPGH) and 453–456 (NKID) contribute to the GTP site. The segment at 453–456 (NKID) is G4. The segment at 489–491 (SAK) is G5.

The protein belongs to the TRAFAC class translation factor GTPase superfamily. Classic translation factor GTPase family. IF-2 subfamily.

The protein localises to the cytoplasm. Its function is as follows. One of the essential components for the initiation of protein synthesis. Protects formylmethionyl-tRNA from spontaneous hydrolysis and promotes its binding to the 30S ribosomal subunits. Also involved in the hydrolysis of GTP during the formation of the 70S ribosomal complex. This chain is Translation initiation factor IF-2, found in Haemophilus influenzae (strain 86-028NP).